The primary structure comprises 365 residues: tRNA 2-selenouridine synthase (365 aa).

Residues 15–138 enclose the Rhodanese domain; sequence FVNDHPIMDA…MRQFLIETID (124 aa). Catalysis depends on C98, which acts as the S-selanylcysteine intermediate.

This sequence belongs to the SelU family. Monomer.

It catalyses the reaction 5-methylaminomethyl-2-thiouridine(34) in tRNA + selenophosphate + (2E)-geranyl diphosphate + H2O + H(+) = 5-methylaminomethyl-2-selenouridine(34) in tRNA + (2E)-thiogeraniol + phosphate + diphosphate. The enzyme catalyses 5-methylaminomethyl-2-thiouridine(34) in tRNA + (2E)-geranyl diphosphate = 5-methylaminomethyl-S-(2E)-geranyl-thiouridine(34) in tRNA + diphosphate. The catalysed reaction is 5-methylaminomethyl-S-(2E)-geranyl-thiouridine(34) in tRNA + selenophosphate + H(+) = 5-methylaminomethyl-2-(Se-phospho)selenouridine(34) in tRNA + (2E)-thiogeraniol. It carries out the reaction 5-methylaminomethyl-2-(Se-phospho)selenouridine(34) in tRNA + H2O = 5-methylaminomethyl-2-selenouridine(34) in tRNA + phosphate. Involved in the post-transcriptional modification of the uridine at the wobble position (U34) of tRNA(Lys), tRNA(Glu) and tRNA(Gln). Catalyzes the conversion of 2-thiouridine (S2U-RNA) to 2-selenouridine (Se2U-RNA). Acts in a two-step process involving geranylation of 2-thiouridine (S2U) to S-geranyl-2-thiouridine (geS2U) and subsequent selenation of the latter derivative to 2-selenouridine (Se2U) in the tRNA chain. The sequence is that of tRNA 2-selenouridine synthase from Shewanella halifaxensis (strain HAW-EB4).